Consider the following 318-residue polypeptide: Beta-galactosidase small subunit (318 aa).

It belongs to the bacterial beta-galactosidase small subunit family. Heterodimer of a large (LacL) and a small subunit (LacM).

The catalysed reaction is Hydrolysis of terminal non-reducing beta-D-galactose residues in beta-D-galactosides.. In terms of biological role, component of a beta-galactosidase. The sequence is that of Beta-galactosidase small subunit from Lactobacillus helveticus (Lactobacillus suntoryeus).